A 437-amino-acid chain; its full sequence is GTPase Obg (437 aa).

In terms of domain architecture, Obg spans 2–160 (SMFLDTAKIS…RQLELELKIL (159 aa)). Residues 161–338 (ADVGLVGFPS…LLEATAELLA (178 aa)) form the OBG-type G domain. GTP-binding positions include 167–174 (GFPSVGKS), 192–196 (FTTIV), 214–217 (DLPG), 284–287 (NKMD), and 319–321 (SSL). Mg(2+) contacts are provided by serine 174 and threonine 194. Positions 359 to 437 (GFAKTEKDFE…IGKFEFEFVD (79 aa)) constitute an OCT domain.

Belongs to the TRAFAC class OBG-HflX-like GTPase superfamily. OBG GTPase family. Monomer. Mg(2+) serves as cofactor.

It localises to the cytoplasm. An essential GTPase which binds GTP, GDP and possibly (p)ppGpp with moderate affinity, with high nucleotide exchange rates and a fairly low GTP hydrolysis rate. Plays a role in control of the cell cycle, stress response, ribosome biogenesis and in those bacteria that undergo differentiation, in morphogenesis control. This chain is GTPase Obg, found in Streptococcus pyogenes serotype M2 (strain MGAS10270).